Consider the following 219-residue polypeptide: Type-5 uracil-DNA glycosylase (219 aa).

4 residues coordinate [4Fe-4S] cluster: C13, C16, C115, and C130.

The protein belongs to the uracil-DNA glycosylase (UDG) superfamily. Type 5 (UDGb) family.

Functionally, DNA glycosylase with broad substrate specificity. Can remove uracil from double-stranded DNA containing either a U/G, U/A, U/C or U/T base pair. Can also excise hypoxanthine from double-stranded DNA containing G/I, T/I, and A/I base pairs, xanthine from both double-stranded and single stranded DNA, thymine from G/T mismatched DNA, 5'-hydroxymethyluracil and 5'-fluorouracil. The polypeptide is Type-5 uracil-DNA glycosylase (Thermus thermophilus (strain ATCC 27634 / DSM 579 / HB8)).